We begin with the raw amino-acid sequence, 31 residues long: Cytochrome b6-f complex subunit 6 (31 aa).

Residues 3-23 (IAIDYFLLVGFCFAFTSGLYL) form a helical membrane-spanning segment.

Belongs to the PetL family. As to quaternary structure, the 4 large subunits of the cytochrome b6-f complex are cytochrome b6, subunit IV (17 kDa polypeptide, PetD), cytochrome f and the Rieske protein, while the 4 small subunits are PetG, PetL, PetM and PetN. The complex functions as a dimer.

The protein localises to the plastid. It localises to the chloroplast thylakoid membrane. Its function is as follows. Component of the cytochrome b6-f complex, which mediates electron transfer between photosystem II (PSII) and photosystem I (PSI), cyclic electron flow around PSI, and state transitions. PetL is important for photoautotrophic growth as well as for electron transfer efficiency and stability of the cytochrome b6-f complex. This is Cytochrome b6-f complex subunit 6 from Trieres chinensis (Marine centric diatom).